The primary structure comprises 241 residues: N-acetylmuramoyl-L-alanine amidase Rv3717 (241 aa).

Residues 1-24 (MIVGVLVAAATPIISSASATPANI) form the signal peptide. The region spanning 29-230 (VFIDPGHNGA…KYANALVRGV (202 aa)) is the MurNAc-LAA domain. Position 35 (histidine 35) interacts with Zn(2+). The segment at 45-69 (RQVPTGRGGTKNCQASGTSTNSGYP) is disordered. Polar residues predominate over residues 55 to 67 (KNCQASGTSTNSG). Residues cysteine 57 and cysteine 105 are joined by a disulfide bond. Residues glutamate 70 and histidine 125 each contribute to the Zn(2+) site. Glutamate 200 acts as the Proton donor/acceptor in catalysis.

It belongs to the N-acetylmuramoyl-L-alanine amidase 3 family. Monomer. Zn(2+) is required as a cofactor.

It is found in the periplasm. It carries out the reaction Hydrolyzes the link between N-acetylmuramoyl residues and L-amino acid residues in certain cell-wall glycopeptides.. It participates in cell wall degradation; peptidoglycan degradation. The structure reveals a short flexible hairpin turn that partially occludes the active site and may be involved in autoregulation. Cell-wall hydrolase that hydrolyzes the amide bond between N-acetylmuramic acid and L-alanine in cell-wall glycopeptides. Is able to hydrolyze the cell walls of several bacterial species (i.e. Paenibacillus sp., B.avium, E.coli DH5alpha, E.aerogenes, L.acidophilus, B.thuringiensis, B.pumilus, B.subtilis and E.coli W3110), thereby showing that it is a cell-wall hydrolase with broad-spectrum activity. May have a role in peptidoglycan fragment recycling. The protein is N-acetylmuramoyl-L-alanine amidase Rv3717 of Mycobacterium tuberculosis (strain ATCC 25618 / H37Rv).